The primary structure comprises 83 residues: UPF0270 protein CGSHiEE_07180 (83 aa).

This sequence belongs to the UPF0270 family.

The protein is UPF0270 protein CGSHiEE_07180 of Haemophilus influenzae (strain PittEE).